A 138-amino-acid polypeptide reads, in one-letter code: Small ribosomal subunit protein uS11 (138 aa).

Low complexity predominate over residues 1–12; it reads MPPAKKAAAAPK. The interval 1–27 is disordered; the sequence is MPPAKKAAAAPKKGQKTRRREKKNVPH. The span at 13 to 22 shows a compositional bias: basic residues; sequence KGQKTRRREK.

Belongs to the universal ribosomal protein uS11 family. In terms of assembly, part of the 30S ribosomal subunit. Interacts with proteins S7 and S18. Binds to IF-3.

Located on the platform of the 30S subunit, it bridges several disparate RNA helices of the 16S rRNA. Forms part of the Shine-Dalgarno cleft in the 70S ribosome. The chain is Small ribosomal subunit protein uS11 from Mycolicibacterium paratuberculosis (strain ATCC BAA-968 / K-10) (Mycobacterium paratuberculosis).